Consider the following 286-residue polypeptide: Protease HtpX homolog (286 aa).

2 helical membrane passes run 7–27 (TFML…MIGG) and 29–49 (SGMM…YWFS). H131 lines the Zn(2+) pocket. The active site involves E132. Zn(2+) is bound at residue H135. The next 2 membrane-spanning stretches (helical) occupy residues 146-166 (LSAT…FFGG) and 177-197 (IAGI…QMAI). E202 contributes to the Zn(2+) binding site.

Belongs to the peptidase M48B family. It depends on Zn(2+) as a cofactor.

It localises to the cell inner membrane. This is Protease HtpX homolog from Ralstonia nicotianae (strain ATCC BAA-1114 / GMI1000) (Ralstonia solanacearum).